Here is a 313-residue protein sequence, read N- to C-terminus: Formate-nitrite transporter (313 aa).

The Cytoplasmic segment spans residues 1–46 (MTKGSKYTIDPISVKTACTSEESYIRCVEYGKGKAHYPNLSLLAKA). A helical membrane pass occupies residues 47–67 (ILAGVFVGVCAHASGIAGGHF). Over 68-77 (YYHKLREHVG) the chain is Extracellular. A helical membrane pass occupies residues 78–98 (ISMSAFVYGFTFPIAFLCIIA). The Cytoplasmic portion of the chain corresponds to 99–127 (TGSDLFTGNTLAVTTALLQRKVTLLEYLR). The chain crosses the membrane as a helical span at residues 128 to 148 (VMSISLFGNYVGAVSFAFFVS). Residues 149–184 (HLSGAFKKHEEIGKNHIFQFLNDIAEKKVSHTFVQC) lie on the Extracellular side of the membrane. The chain crosses the membrane as a helical span at residues 185-205 (VCLAIGCNIFVCLAVYFVLTI). The Cytoplasmic portion of the chain corresponds to 206 to 210 (KDGSG). The chain crosses the membrane as a helical span at residues 211–231 (MVFSVFFAVYAFAIAGYEHII). Over 232-256 (ANMYTLNLALMIEANVDWTKVYVDN) the chain is Extracellular. A helical membrane pass occupies residues 257-277 (LLPTLIGNYIAGAIVLACPLF). Topologically, residues 278 to 313 (YIYRHSYSDYEKTRGDGGNSGLKSLSIEMQNGSSGR) are cytoplasmic. A disordered region spans residues 290–313 (TRGDGGNSGLKSLSIEMQNGSSGR). Residues 298 to 313 (GLKSLSIEMQNGSSGR) show a composition bias toward polar residues.

The protein belongs to the FNT transporter (TC 1.A.16) family. As to quaternary structure, homopentamer.

It localises to the cell membrane. It is found in the vacuole membrane. It carries out the reaction (S)-lactate(in) + H(+)(in) = (S)-lactate(out) + H(+)(out). The catalysed reaction is formate(in) + H(+)(in) = formate(out) + H(+)(out). It catalyses the reaction pyruvate(out) + H(+)(out) = pyruvate(in) + H(+)(in). The enzyme catalyses acetate(out) + H(+)(out) = acetate(in) + H(+)(in). With respect to regulation, inhibited by the Malaria Box compound MMV007839 and its derivatives BH296 and BH267.meta. Monocarboxylate-proton symporter that mediates the efflux of the waste product lactate in the intraerythrocytic parasites; active in acidic-to-neutral pH range. Transports L-lactate. The protein is Formate-nitrite transporter of Plasmodium vivax.